A 475-amino-acid chain; its full sequence is 3-isopropylmalate dehydratase large subunit (475 aa).

Positions 348, 408, and 411 each coordinate [4Fe-4S] cluster.

The protein belongs to the aconitase/IPM isomerase family. LeuC type 1 subfamily. As to quaternary structure, heterodimer of LeuC and LeuD. It depends on [4Fe-4S] cluster as a cofactor.

It catalyses the reaction (2R,3S)-3-isopropylmalate = (2S)-2-isopropylmalate. Its pathway is amino-acid biosynthesis; L-leucine biosynthesis; L-leucine from 3-methyl-2-oxobutanoate: step 2/4. Its function is as follows. Catalyzes the isomerization between 2-isopropylmalate and 3-isopropylmalate, via the formation of 2-isopropylmaleate. The chain is 3-isopropylmalate dehydratase large subunit from Acidobacterium capsulatum (strain ATCC 51196 / DSM 11244 / BCRC 80197 / JCM 7670 / NBRC 15755 / NCIMB 13165 / 161).